The sequence spans 418 residues: CinA-like protein (418 aa).

Belongs to the CinA family.

In Leptospira borgpetersenii serovar Hardjo-bovis (strain L550), this protein is CinA-like protein.